A 193-amino-acid polypeptide reads, in one-letter code: Oligoribonuclease (193 aa).

One can recognise an Exonuclease domain in the interval 8–171 (LVWLDLEMTG…EDIRESVAEL (164 aa)). The active site involves Tyr-129.

This sequence belongs to the oligoribonuclease family.

It localises to the cytoplasm. Its function is as follows. 3'-to-5' exoribonuclease specific for small oligoribonucleotides. In Alkalilimnicola ehrlichii (strain ATCC BAA-1101 / DSM 17681 / MLHE-1), this protein is Oligoribonuclease.